The following is a 512-amino-acid chain: MWTILLTILIAGLLYRYVKRHYTHWQRLGVDEEPAKIPFGVMDTVMKQERSLGMALADIYARHEGKIVGIYMLNKRSILIRDAQLARQIMTSDFASFHDRGVYVDEDKDPLSANLFNLRGASWRNLRQKLTPSFSSGKIKGMFGTIDDVGDKLVQHLEGALDQSDEVEIKDVMTTYAVDIIGSVIFGLEIDSFRNPKNEFREISSSTSRDESLLLKIHNMSMFICPPIAKLMNRLGYESRILTSLRDMMKRTIEFREEHNVVRKDMLQLLIRLRNTGKIGEDDDQVWDMETAQEQLKSMSIEKIAAQAFLFYVAGSESTAAASAFTLYELSMYPELLKEAQEEVDAVLMKHNLKPKDRFTYEAVQDLKFLDICIMETIRKYPGLPFLNRECTEDYPVPGTNHIIAKGTPILISLFGMQRDPVYFPNPNGYDPHRFDSNNMNYDQAAYMPFGEGPRHCIALRMGKVNSKVAVAKILANFDLVQSPRKEVEFRFDAAPVLVTKEPLKLRLTKRK.

Cys-457 is a heme binding site.

Belongs to the cytochrome P450 family. The cofactor is heme.

Its subcellular location is the endoplasmic reticulum membrane. The protein resides in the microsome membrane. In terms of biological role, may be involved in the metabolism of insect hormones and in the breakdown of synthetic insecticides. This Drosophila melanogaster (Fruit fly) protein is Probable cytochrome P450 6d2 (Cyp6d2).